Consider the following 408-residue polypeptide: 1-deoxy-D-xylulose 5-phosphate reductoisomerase (408 aa).

8 residues coordinate NADPH: Thr-27, Gly-28, Ser-29, Ile-30, Ala-53, Arg-54, Asn-55, and Asn-140. Lys-141 lines the 1-deoxy-D-xylulose 5-phosphate pocket. Glu-142 provides a ligand contact to NADPH. Residue Asp-166 participates in Mn(2+) binding. 1-deoxy-D-xylulose 5-phosphate is bound by residues Ser-167, Glu-168, Ser-192, and His-215. Residue Glu-168 coordinates Mn(2+). NADPH is bound at residue Gly-221. 1-deoxy-D-xylulose 5-phosphate is bound by residues Ser-228, Asn-233, Lys-234, and Glu-237. Glu-237 lines the Mn(2+) pocket.

Belongs to the DXR family. It depends on Mg(2+) as a cofactor. The cofactor is Mn(2+).

The catalysed reaction is 2-C-methyl-D-erythritol 4-phosphate + NADP(+) = 1-deoxy-D-xylulose 5-phosphate + NADPH + H(+). Its pathway is isoprenoid biosynthesis; isopentenyl diphosphate biosynthesis via DXP pathway; isopentenyl diphosphate from 1-deoxy-D-xylulose 5-phosphate: step 1/6. In terms of biological role, catalyzes the NADPH-dependent rearrangement and reduction of 1-deoxy-D-xylulose-5-phosphate (DXP) to 2-C-methyl-D-erythritol 4-phosphate (MEP). This Nitratidesulfovibrio vulgaris (strain DP4) (Desulfovibrio vulgaris) protein is 1-deoxy-D-xylulose 5-phosphate reductoisomerase.